The primary structure comprises 559 residues: Suppressor of tumorigenicity 7 protein-like (559 aa).

3 consecutive transmembrane segments (helical) span residues 39–59 (GLAN…LYAL), 83–103 (FYVA…IFEW), and 513–533 (LPFF…IALL).

Belongs to the ST7 family.

Its subcellular location is the membrane. This chain is Suppressor of tumorigenicity 7 protein-like (St7l), found in Rattus norvegicus (Rat).